A 344-amino-acid chain; its full sequence is Tripartite motif-containing protein 44 (344 aa).

Disordered stretches follow at residues 1 to 25 (MASG…EPDE) and 68 to 165 (TPPA…EFDP). The segment covering 75–92 (GAGKEEAEVKVEQEREIE) has biased composition (basic and acidic residues). Residues 93–165 (SEAGEESESE…ETEAESEFDP (73 aa)) show a composition bias toward acidic residues. A B box-type zinc finger spans residues 174-215 (VAKRKCPDHGLDLSTYCQEDRQLICVLCPVIGAHQGHQLSTL). Zn(2+)-binding residues include Cys179, His182, Cys201, and His207. Residues 290 to 325 (AHVTEILADIQSHMDRLMTQMAQAKEQLDTSNESAE) adopt a coiled-coil conformation. The segment at 309-344 (QMAQAKEQLDTSNESAEPKAEGDEEGPSGASEEEDT) is disordered. A compositionally biased stretch (acidic residues) spans 330 to 344 (GDEEGPSGASEEEDT). 2 positions are modified to phosphoserine: Ser336 and Ser339.

In terms of assembly, interacts (via coiled coil) with TRIM17 (via coiled coil).

Its function is as follows. May play a role in the process of differentiation and maturation of neuronal cells. May regulate the activity of TRIM17. Is a negative regulator of PAX6 expression. The protein is Tripartite motif-containing protein 44 (TRIM44) of Pongo abelii (Sumatran orangutan).